The following is a 609-amino-acid chain: Putative transcriptional regulatory protein y4pA (609 aa).

Positions 313-533 constitute a Sigma-54 factor interaction domain; it reads IVGRSPSIQQ…LRSVLETAAI (221 aa). 395-404 contacts ATP; the sequence is HPKATLLIES. The H-T-H motif DNA-binding region spans 578 to 597; sequence RGEAARYLGISRKTLYNKMR.

Its function is as follows. Probable transcriptional regulator that acts in conjunction with sigma-54. This is Putative transcriptional regulatory protein y4pA from Sinorhizobium fredii (strain NBRC 101917 / NGR234).